A 755-amino-acid polypeptide reads, in one-letter code: Polyribonucleotide nucleotidyltransferase (755 aa).

2 residues coordinate Mg(2+): Asp527 and Asp533. A KH domain is found at 593-652; it reads PRITTIKVPVDKIGEVIGPKGKMINSITEETGANISIEDDGTVFVGAADGASAQAAIDKI. The S1 motif domain occupies 664–733; the sequence is GERFLGTVVK…NRGKISLVPV (70 aa). Residues 734-755 form a disordered region; it reads GEEDAAEAPAPAEAQPADAVTQ. The segment covering 740 to 755 has biased composition (low complexity); the sequence is EAPAPAEAQPADAVTQ.

It belongs to the polyribonucleotide nucleotidyltransferase family. It depends on Mg(2+) as a cofactor.

The protein localises to the cytoplasm. It carries out the reaction RNA(n+1) + phosphate = RNA(n) + a ribonucleoside 5'-diphosphate. Its function is as follows. Involved in mRNA degradation. Catalyzes the phosphorolysis of single-stranded polyribonucleotides processively in the 3'- to 5'-direction. The protein is Polyribonucleotide nucleotidyltransferase of Mycobacteroides abscessus (strain ATCC 19977 / DSM 44196 / CCUG 20993 / CIP 104536 / JCM 13569 / NCTC 13031 / TMC 1543 / L948) (Mycobacterium abscessus).